A 676-amino-acid chain; its full sequence is DNA ligase (676 aa).

NAD(+) contacts are provided by residues 35 to 39 (DNEYD), 84 to 85 (SL), and E115. K117 serves as the catalytic N6-AMP-lysine intermediate. R138, E177, K294, and K318 together coordinate NAD(+). Residues C412, C415, C430, and C436 each coordinate Zn(2+). A BRCT domain is found at 595–676 (PTRQPLNGES…FLAFLAQYSA (82 aa)).

The protein belongs to the NAD-dependent DNA ligase family. LigA subfamily. Mg(2+) serves as cofactor. Mn(2+) is required as a cofactor.

The enzyme catalyses NAD(+) + (deoxyribonucleotide)n-3'-hydroxyl + 5'-phospho-(deoxyribonucleotide)m = (deoxyribonucleotide)n+m + AMP + beta-nicotinamide D-nucleotide.. DNA ligase that catalyzes the formation of phosphodiester linkages between 5'-phosphoryl and 3'-hydroxyl groups in double-stranded DNA using NAD as a coenzyme and as the energy source for the reaction. It is essential for DNA replication and repair of damaged DNA. The polypeptide is DNA ligase (Acinetobacter baylyi (strain ATCC 33305 / BD413 / ADP1)).